Reading from the N-terminus, the 194-residue chain is Ion-translocating oxidoreductase complex subunit A (194 aa).

6 helical membrane passes run 4 to 24, 39 to 59, 72 to 92, 102 to 122, 135 to 155, and 172 to 192; these read LALILVSAILVNNFVLVQFLG, IGLSLATTFVLTLAAMCSHIL, LRTIGFILVIAVVVQFTEMLV, VLGIFLPLITTNCIVLGVALL, TTQGFGAGLGFSLVLVLFAAL, and AIGMITAGLMSLAFMGFSGLV.

The protein belongs to the NqrDE/RnfAE family. The complex is composed of six subunits: RnfA, RnfB, RnfC, RnfD, RnfE and RnfG.

It is found in the cell inner membrane. Its function is as follows. Part of a membrane-bound complex that couples electron transfer with translocation of ions across the membrane. This is Ion-translocating oxidoreductase complex subunit A from Pseudomonas aeruginosa (strain LESB58).